The primary structure comprises 382 residues: Protein PEP-RELATED DEVELOPMENT ARRESTED 1 homolog, chloroplastic (382 aa).

Residues 1 to 44 constitute a chloroplast transit peptide; that stretch reads MAILPLSISHSLTSALSATSSGIGRPVARLLHPRVPSRPTVICL.

The protein localises to the plastid. Its subcellular location is the chloroplast stroma. The protein resides in the chloroplast nucleoid. In terms of biological role, plays an essential role in early steps of chloroplast development. May be involved in the redox control of plastid gene expression by maintening the redox state around chloroplast nucleoids. May positively regulate plastid-encoded RNA polymerase (PEP) activity. In Oryza sativa subsp. japonica (Rice), this protein is Protein PEP-RELATED DEVELOPMENT ARRESTED 1 homolog, chloroplastic.